We begin with the raw amino-acid sequence, 757 residues long: Xaa-Pro dipeptidyl-peptidase (757 aa).

Residues serine 348, aspartate 468, and histidine 498 each act as charge relay system in the active site.

Belongs to the peptidase S15 family. As to quaternary structure, homodimer.

It is found in the cytoplasm. The catalysed reaction is Hydrolyzes Xaa-Pro-|- bonds to release unblocked, N-terminal dipeptides from substrates including Ala-Pro-|-p-nitroanilide and (sequentially) Tyr-Pro-|-Phe-Pro-|-Gly-Pro-|-Ile.. In terms of biological role, removes N-terminal dipeptides sequentially from polypeptides having unsubstituted N-termini provided that the penultimate residue is proline. In Streptococcus pneumoniae (strain P1031), this protein is Xaa-Pro dipeptidyl-peptidase.